The chain runs to 217 residues: Thiopurine S-methyltransferase (217 aa).

The S-adenosyl-L-methionine site is built by W10, L45, E66, and R127.

This sequence belongs to the class I-like SAM-binding methyltransferase superfamily. TPMT family.

It is found in the cytoplasm. It carries out the reaction S-adenosyl-L-methionine + a thiopurine = S-adenosyl-L-homocysteine + a thiopurine S-methylether.. The protein is Thiopurine S-methyltransferase of Acinetobacter baylyi (strain ATCC 33305 / BD413 / ADP1).